A 181-amino-acid chain; its full sequence is ADP-ribosylation factor 2 (181 aa).

Residue Gly2 is the site of N-myristoyl glycine attachment. GTP contacts are provided by residues 24–31, 67–71, and 126–129; these read GLDAAGKT, DVGGQ, and NKQD.

It belongs to the small GTPase superfamily. Arf family.

It localises to the golgi apparatus. GTP-binding protein that functions as an allosteric activator of the cholera toxin catalytic subunit, an ADP-ribosyltransferase. Involved in protein trafficking; may modulate vesicle budding and uncoating within the Golgi apparatus. This chain is ADP-ribosylation factor 2 (ARF2), found in Bos taurus (Bovine).